A 118-amino-acid polypeptide reads, in one-letter code: UPF0342 protein Hore_03100 (118 aa).

This sequence belongs to the UPF0342 family.

This Halothermothrix orenii (strain H 168 / OCM 544 / DSM 9562) protein is UPF0342 protein Hore_03100.